Here is a 426-residue protein sequence, read N- to C-terminus: Tyrosine--tRNA ligase (426 aa).

Y38 serves as a coordination point for L-tyrosine. The short motif at 43–52 (PTADSLHIGS) is the 'HIGH' region element. L-tyrosine is bound by residues Y176 and Q180. Positions 236–240 (KFGKT) match the 'KMSKS' region motif. ATP is bound at residue K239. The region spanning 359–426 (QTIVEVLTQS…KKLFNLYIWK (68 aa)) is the S4 RNA-binding domain.

It belongs to the class-I aminoacyl-tRNA synthetase family. TyrS type 1 subfamily. In terms of assembly, homodimer.

The protein localises to the cytoplasm. It catalyses the reaction tRNA(Tyr) + L-tyrosine + ATP = L-tyrosyl-tRNA(Tyr) + AMP + diphosphate + H(+). Functionally, catalyzes the attachment of tyrosine to tRNA(Tyr) in a two-step reaction: tyrosine is first activated by ATP to form Tyr-AMP and then transferred to the acceptor end of tRNA(Tyr). The sequence is that of Tyrosine--tRNA ligase from Aliivibrio fischeri (strain ATCC 700601 / ES114) (Vibrio fischeri).